Reading from the N-terminus, the 649-residue chain is Acetyl-coenzyme A synthetase (649 aa).

Residues 190-193 and Thr310 each bind CoA; that span reads RGGR. ATP is bound by residues 386–388, 410–415, Asp499, and Arg514; these read GEP and DTWWQT. Ser522 contacts CoA. An ATP-binding site is contributed by Arg525. Mg(2+)-binding residues include Val536, His538, and Val541. A CoA-binding site is contributed by Arg583. Lys608 is subject to N6-acetyllysine.

It belongs to the ATP-dependent AMP-binding enzyme family. Mg(2+) is required as a cofactor. Post-translationally, acetylated. Deacetylation by the SIR2-homolog deacetylase activates the enzyme.

The enzyme catalyses acetate + ATP + CoA = acetyl-CoA + AMP + diphosphate. Its function is as follows. Catalyzes the conversion of acetate into acetyl-CoA (AcCoA), an essential intermediate at the junction of anabolic and catabolic pathways. AcsA undergoes a two-step reaction. In the first half reaction, AcsA combines acetate with ATP to form acetyl-adenylate (AcAMP) intermediate. In the second half reaction, it can then transfer the acetyl group from AcAMP to the sulfhydryl group of CoA, forming the product AcCoA. This chain is Acetyl-coenzyme A synthetase, found in Methylorubrum populi (strain ATCC BAA-705 / NCIMB 13946 / BJ001) (Methylobacterium populi).